The primary structure comprises 465 residues: ATP synthase subunit beta (465 aa).

152 to 159 (GGAGVGKT) provides a ligand contact to ATP.

Belongs to the ATPase alpha/beta chains family. F-type ATPases have 2 components, CF(1) - the catalytic core - and CF(0) - the membrane proton channel. CF(1) has five subunits: alpha(3), beta(3), gamma(1), delta(1), epsilon(1). CF(0) has three main subunits: a(1), b(2) and c(9-12). The alpha and beta chains form an alternating ring which encloses part of the gamma chain. CF(1) is attached to CF(0) by a central stalk formed by the gamma and epsilon chains, while a peripheral stalk is formed by the delta and b chains.

It is found in the cell membrane. The catalysed reaction is ATP + H2O + 4 H(+)(in) = ADP + phosphate + 5 H(+)(out). Functionally, produces ATP from ADP in the presence of a proton gradient across the membrane. The catalytic sites are hosted primarily by the beta subunits. In Ruminiclostridium cellulolyticum (strain ATCC 35319 / DSM 5812 / JCM 6584 / H10) (Clostridium cellulolyticum), this protein is ATP synthase subunit beta.